The chain runs to 144 residues: MRLNTLSPAAGAKSAAKRVGRGIGSGTGKTCGRGHKGQKSRSGGGVRVGFEGGQMPLKIRLPKFGFTSRRALVTAEVRISELAKVNGDVVDLNALKDANLVTRNIQFAKIVLSGTIERPVTVKGLKVTKGARAAIEAAGGKIEE.

The tract at residues 1-49 is disordered; it reads MRLNTLSPAAGAKSAAKRVGRGIGSGTGKTCGRGHKGQKSRSGGGVRVG. Over residues 21-31 the composition is skewed to gly residues; that stretch reads RGIGSGTGKTC.

Belongs to the universal ribosomal protein uL15 family. As to quaternary structure, part of the 50S ribosomal subunit.

Binds to the 23S rRNA. This is Large ribosomal subunit protein uL15 from Shewanella sediminis (strain HAW-EB3).